The chain runs to 392 residues: Putative cystathionine gamma-lyase 2 (392 aa).

The segment at L32 to P55 is disordered. Positions N40–S50 are enriched in basic and acidic residues. R51, Y103, and R108 together coordinate substrate. K203 carries the post-translational modification N6-(pyridoxal phosphate)lysine. Position 330 (E330) interacts with substrate.

This sequence belongs to the trans-sulfuration enzymes family. Requires pyridoxal 5'-phosphate as cofactor.

It localises to the cytoplasm. It carries out the reaction L,L-cystathionine + H2O = 2-oxobutanoate + L-cysteine + NH4(+). Its pathway is amino-acid biosynthesis; L-cysteine biosynthesis; L-cysteine from L-homocysteine and L-serine: step 2/2. This Caenorhabditis elegans protein is Putative cystathionine gamma-lyase 2 (cth-2).